The sequence spans 631 residues: Shootin-1 (631 aa).

An N-acetylmethionine modification is found at Met1. 2 positions are modified to phosphoserine: Ser3 and Ser4. Residues 7–353 (EKQLQLITSL…RVNQSENSVP (347 aa)) adopt a coiled-coil conformation. Ser101 carries the phosphoserine; by PAK1 modification. Ser249 carries the post-translational modification Phosphoserine. The interval 343 to 511 (KRVNQSENSV…SESKSMPVLG (169 aa)) is disordered. Over residues 352–369 (VPPPPPPPPPLPPPPPNP) the composition is skewed to pro residues. Ser375 carries the post-translational modification Phosphoserine. Positions 403-418 (TDLKRQAVEEMMDRIK) are enriched in basic and acidic residues. Over residues 456–465 (LNKSTSSRSL) the composition is skewed to polar residues. Ser473 is subject to Phosphoserine. Thr487 carries the post-translational modification Phosphothreonine. Polar residues predominate over residues 490–505 (ADSSSPTGILATSESK). Residue Ser494 is modified to Phosphoserine. Thr496 bears the Phosphothreonine mark. Phosphoserine occurs at positions 506, 515, 532, and 534. Disordered regions lie at residues 524–566 (KTLE…IGCR) and 579–631 (VVVL…SSNC). Residue Thr537 is modified to Phosphothreonine. The span at 550-561 (CTSSKVTFQPPS) shows a compositional bias: polar residues. A compositionally biased stretch (basic and acidic residues) spans 590-631 (PQTKDQVAEKDPTQHKEDEGEIQPENKEDSIENVRETDSSNC).

It belongs to the shootin family. In terms of assembly, interacts with L1CAM; this interaction occurs in axonal growth cones. Interacts with actin filament retrograde flow; this interaction is enhanced in a netrin-1- and PAK1-dependent manner and promotes F-actin-substrate coupling and concomitant formation of traction forces at axonal growth cones. Interacts with RUFY3. Interacts with PFN2. Interacts (via N-terminus) with KIF20B; this interaction is direct and promotes the association of SHTN1 to microtubules in primary neurons. Associates with microtubule. Post-translationally, phosphorylated on Ser-101 and Ser-249 by PAK1 through a CDC42- and RAC1-dependent signaling pathway, which enhances its association with F-actin retrograde flow in filopodia and lamellipodia of axonal growth cones. Phosphorylation on Ser-101 and Ser-249 is increased by netrin-1.

It is found in the perikaryon. The protein localises to the cell projection. The protein resides in the axon. Its subcellular location is the growth cone. It localises to the cytoplasm. It is found in the cytoskeleton. The protein localises to the filopodium. The protein resides in the lamellipodium. Functionally, involved in the generation of internal asymmetric signals required for neuronal polarization and neurite outgrowth. Mediates netrin-1-induced F-actin-substrate coupling or 'clutch engagement' within the axon growth cone through activation of CDC42, RAC1 and PAK1-dependent signaling pathway, thereby converting the F-actin retrograde flow into traction forces, concomitantly with filopodium extension and axon outgrowth. Plays a role in cytoskeletal organization by regulating the subcellular localization of phosphoinositide 3-kinase (PI3K) activity at the axonal growth cone. Also plays a role in regenerative neurite outgrowth. In the developing cortex, cooperates with KIF20B to promote both the transition from the multipolar to the bipolar stage and the radial migration of cortical neurons from the ventricular zone toward the superficial layer of the neocortex. Involved in the accumulation of phosphatidylinositol 3,4,5-trisphosphate (PIP3) in the growth cone of primary hippocampal neurons. The chain is Shootin-1 from Homo sapiens (Human).